We begin with the raw amino-acid sequence, 128 residues long: MPTQPSKELERIPNPKPERDYEIEITTNEFTCVCPRTGQPDFATITIRYVPDQWIVELKSLKLYLWSYRNEGHYHEEVTNTILDDLVRTLEPRRMTVIADFNIRGGLHTVVTARYERTAEGPARLAAD.

The active-site Thioimide intermediate is the Cys-34. The active-site Proton donor is the Asp-41. Residues Val-56–Leu-58 and His-75–Glu-76 each bind substrate.

It belongs to the GTP cyclohydrolase I family. QueF type 1 subfamily.

It localises to the cytoplasm. It catalyses the reaction 7-aminomethyl-7-carbaguanine + 2 NADP(+) = 7-cyano-7-deazaguanine + 2 NADPH + 3 H(+). It functions in the pathway tRNA modification; tRNA-queuosine biosynthesis. Functionally, catalyzes the NADPH-dependent reduction of 7-cyano-7-deazaguanine (preQ0) to 7-aminomethyl-7-deazaguanine (preQ1). This is NADPH-dependent 7-cyano-7-deazaguanine reductase from Thermomicrobium roseum (strain ATCC 27502 / DSM 5159 / P-2).